The sequence spans 618 residues: Transport protein particle subunit trs85-2 (618 aa).

The protein belongs to the TRS85 family. In terms of assembly, part of the multisubunit TRAPP (transport protein particle) complexes I and II.

Its subcellular location is the golgi apparatus. It is found in the cis-Golgi network. Its function is as follows. Component of the TRAPP I and TRAPP II complexes. TRAPP I plays a key role in the late stages of endoplasmic reticulum to Golgi traffic. TRAPP II seems to play a role in intra-Golgi transport. Has a role late in meiosis following DNA replication. This is Transport protein particle subunit trs85-2 (trs85-2) from Schizosaccharomyces pombe (strain 972 / ATCC 24843) (Fission yeast).